A 122-amino-acid polypeptide reads, in one-letter code: Large ribosomal subunit protein uL18 (122 aa).

Belongs to the universal ribosomal protein uL18 family. Part of the 50S ribosomal subunit; part of the 5S rRNA/L5/L18/L25 subcomplex. Contacts the 5S and 23S rRNAs.

Its function is as follows. This is one of the proteins that bind and probably mediate the attachment of the 5S RNA into the large ribosomal subunit, where it forms part of the central protuberance. This Desulforapulum autotrophicum (strain ATCC 43914 / DSM 3382 / VKM B-1955 / HRM2) (Desulfobacterium autotrophicum) protein is Large ribosomal subunit protein uL18.